Here is a 344-residue protein sequence, read N- to C-terminus: Phenylalanine--tRNA ligase alpha subunit (344 aa).

Glu-258 is a Mg(2+) binding site.

The protein belongs to the class-II aminoacyl-tRNA synthetase family. Phe-tRNA synthetase alpha subunit type 1 subfamily. In terms of assembly, tetramer of two alpha and two beta subunits. It depends on Mg(2+) as a cofactor.

Its subcellular location is the cytoplasm. The enzyme catalyses tRNA(Phe) + L-phenylalanine + ATP = L-phenylalanyl-tRNA(Phe) + AMP + diphosphate + H(+). The sequence is that of Phenylalanine--tRNA ligase alpha subunit from Thiobacillus denitrificans (strain ATCC 25259 / T1).